We begin with the raw amino-acid sequence, 350 residues long: Guanine nucleotide-binding protein G(t) subunit alpha-1 (350 aa).

Residues Met1–Glu21 form a disordered region. Gly2 carries N-myristoyl glycine lipidation. Residues Ala7 to Glu21 are compositionally biased toward basic and acidic residues. The G-alpha domain maps to Arg28–Phe350. The G1 motif stretch occupies residues Lys31–Thr44. Gly36–Ser43 contributes to the GTP binding site. Ser43 is a Mg(2+) binding site. Tyr142 bears the Phosphotyrosine mark. GTP contacts are provided by residues Asp146, Leu171–Thr177, Gly199, Asn265–Asp268, and Ala322. Residues Asp169–Thr177 form a G2 motif region. Thr177 provides a ligand contact to Mg(2+). The G3 motif stretch occupies residues Phe192–Arg201. Positions Val261–Asp268 are G4 motif. The segment at Thr320–Thr325 is G5 motif. Residues Ile340–Phe350 are interaction with RHO.

In terms of assembly, heterotrimeric G proteins are composed of 3 subunits alpha, beta and gamma. The alpha chain contains the guanine nucleotide binding site. Interacts with RHO. Interacts with RGS9 and PDE6G. Interacts (when myristoylated) with UNC119; interaction is required for localization in sensory neurons. In terms of tissue distribution, rod.

The protein localises to the cell projection. It localises to the cilium. It is found in the photoreceptor outer segment. Its subcellular location is the membrane. The protein resides in the photoreceptor inner segment. In terms of biological role, functions as a signal transducer for the rod photoreceptor RHO. Required for normal RHO-mediated light perception by the retina. Guanine nucleotide-binding proteins (G proteins) function as transducers downstream of G protein-coupled receptors (GPCRs), such as the photoreceptor RHO. The alpha chain contains the guanine nucleotide binding site and alternates between an active, GTP-bound state and an inactive, GDP-bound state. Activated RHO promotes GDP release and GTP binding. Signaling is mediated via downstream effector proteins, such as cGMP-phosphodiesterase. This chain is Guanine nucleotide-binding protein G(t) subunit alpha-1 (GNAT1), found in Bos taurus (Bovine).